The following is a 215-amino-acid chain: tRNA (guanine-N(7)-)-methyltransferase (215 aa).

S-adenosyl-L-methionine-binding residues include Glu-43, Glu-68, Asp-95, and Asp-117. Asp-117 is an active-site residue. Substrate contacts are provided by residues Lys-121, Asp-153, and 190–193 (TEYE).

This sequence belongs to the class I-like SAM-binding methyltransferase superfamily. TrmB family.

It catalyses the reaction guanosine(46) in tRNA + S-adenosyl-L-methionine = N(7)-methylguanosine(46) in tRNA + S-adenosyl-L-homocysteine. Its pathway is tRNA modification; N(7)-methylguanine-tRNA biosynthesis. Catalyzes the formation of N(7)-methylguanine at position 46 (m7G46) in tRNA. This Staphylococcus epidermidis (strain ATCC 35984 / DSM 28319 / BCRC 17069 / CCUG 31568 / BM 3577 / RP62A) protein is tRNA (guanine-N(7)-)-methyltransferase.